A 238-amino-acid chain; its full sequence is ATP synthase subunit a (238 aa).

A run of 5 helical transmembrane segments spans residues 18 to 38, 75 to 95, 112 to 132, 179 to 199, and 203 to 223; these read LTILAMSLLTITIIFILVFWA, YSLLMFILFSFVFVANNLGLM, NFGVDITLSLLVAFICHIEGI, VVTGLLLQLAVLSPFTGPLAF, and IVWTAFSMFIGFIQAYVFIIL.

Belongs to the ATPase A chain family. In terms of assembly, F-type ATPases have 2 components, CF(1) - the catalytic core - and CF(0) - the membrane proton channel. CF(1) has five subunits: alpha(3), beta(3), gamma(1), delta(1), epsilon(1). CF(0) has three main subunits: a(1), b(2) and c(9-12). The alpha and beta chains form an alternating ring which encloses part of the gamma chain. CF(1) is attached to CF(0) by a central stalk formed by the gamma and epsilon chains, while a peripheral stalk is formed by the delta and b chains.

Its subcellular location is the cell membrane. Key component of the proton channel; it plays a direct role in the translocation of protons across the membrane. This chain is ATP synthase subunit a, found in Streptococcus agalactiae serotype III (strain NEM316).